The sequence spans 212 residues: MQHPLYQQATYLKSAPDLSHCPEDFGYEVAFAGRSNAGKSSALNVITSQRGLAKTSKTPGRTQLINFFECDEQRKLVDLPGYGYAKVNVNTKRAWERSLSQYIEVRSSLKGLIMMVDSRMPPTEIDLMMLDWTLTLNLPVHILLTKSDKLKKGPAQNSLLKMRQLLNEKYPHATVQLFSSLKRQGLDEVWAKLDEWMEYERPVKSQPETKES.

In terms of domain architecture, EngB-type G spans 25–199; the sequence is FGYEVAFAGR…WAKLDEWMEY (175 aa). Residues 33–40, 60–64, 78–81, 145–148, and 178–180 contribute to the GTP site; these read GRSNAGKS, GRTQL, DLPG, TKSD, and FSS. The Mg(2+) site is built by Ser40 and Thr62.

Belongs to the TRAFAC class TrmE-Era-EngA-EngB-Septin-like GTPase superfamily. EngB GTPase family. Mg(2+) serves as cofactor.

In terms of biological role, necessary for normal cell division and for the maintenance of normal septation. The polypeptide is Probable GTP-binding protein EngB (Hydrogenovibrio crunogenus (strain DSM 25203 / XCL-2) (Thiomicrospira crunogena)).